The chain runs to 226 residues: Putative methyltransferase RP459 (226 aa).

Belongs to the methyltransferase superfamily.

This is Putative methyltransferase RP459 from Rickettsia prowazekii (strain Madrid E).